A 400-amino-acid chain; its full sequence is CCA-adding enzyme (400 aa).

2 residues coordinate ATP: G28 and R31. Residues G28 and R31 each contribute to the CTP site. 2 residues coordinate Mg(2+): D41 and D43. Residues R112, D155, R158, R161, and R164 each contribute to the ATP site. CTP is bound by residues R112, D155, R158, R161, and R164.

This sequence belongs to the tRNA nucleotidyltransferase/poly(A) polymerase family. Bacterial CCA-adding enzyme type 3 subfamily. Homodimer. The cofactor is Mg(2+).

It catalyses the reaction a tRNA precursor + 2 CTP + ATP = a tRNA with a 3' CCA end + 3 diphosphate. The catalysed reaction is a tRNA with a 3' CCA end + 2 CTP + ATP = a tRNA with a 3' CCACCA end + 3 diphosphate. Its function is as follows. Catalyzes the addition and repair of the essential 3'-terminal CCA sequence in tRNAs without using a nucleic acid template. Adds these three nucleotides in the order of C, C, and A to the tRNA nucleotide-73, using CTP and ATP as substrates and producing inorganic pyrophosphate. tRNA 3'-terminal CCA addition is required both for tRNA processing and repair. Also involved in tRNA surveillance by mediating tandem CCA addition to generate a CCACCA at the 3' terminus of unstable tRNAs. While stable tRNAs receive only 3'-terminal CCA, unstable tRNAs are marked with CCACCA and rapidly degraded. The protein is CCA-adding enzyme of Staphylococcus aureus (strain MSSA476).